The chain runs to 330 residues: Ketol-acid reductoisomerase (NADP(+)) (330 aa).

A KARI N-terminal Rossmann domain is found at 1–182; sequence MAVVYYDQDA…GATRAGVIET (182 aa). Residues 25–28, arginine 48, serine 51, serine 53, and 83–86 each bind NADP(+); these read YGSQ and DETQ. The active site involves histidine 108. Glycine 134 contributes to the NADP(+) binding site. The 146-residue stretch at 183 to 328 folds into the KARI C-terminal knotted domain; the sequence is TFKEETETDL…DQLREMMSWL (146 aa). Mg(2+) is bound by residues aspartate 191, glutamate 195, glutamate 227, and glutamate 231. Serine 252 is a substrate binding site.

The protein belongs to the ketol-acid reductoisomerase family. Requires Mg(2+) as cofactor.

The catalysed reaction is (2R)-2,3-dihydroxy-3-methylbutanoate + NADP(+) = (2S)-2-acetolactate + NADPH + H(+). It carries out the reaction (2R,3R)-2,3-dihydroxy-3-methylpentanoate + NADP(+) = (S)-2-ethyl-2-hydroxy-3-oxobutanoate + NADPH + H(+). The protein operates within amino-acid biosynthesis; L-isoleucine biosynthesis; L-isoleucine from 2-oxobutanoate: step 2/4. Its pathway is amino-acid biosynthesis; L-valine biosynthesis; L-valine from pyruvate: step 2/4. Its function is as follows. Involved in the biosynthesis of branched-chain amino acids (BCAA). Catalyzes an alkyl-migration followed by a ketol-acid reduction of (S)-2-acetolactate (S2AL) to yield (R)-2,3-dihydroxy-isovalerate. In the isomerase reaction, S2AL is rearranged via a Mg-dependent methyl migration to produce 3-hydroxy-3-methyl-2-ketobutyrate (HMKB). In the reductase reaction, this 2-ketoacid undergoes a metal-dependent reduction by NADPH to yield (R)-2,3-dihydroxy-isovalerate. This chain is Ketol-acid reductoisomerase (NADP(+)), found in Moorella thermoacetica (strain ATCC 39073 / JCM 9320).